We begin with the raw amino-acid sequence, 145 residues long: MKNTFRISLKAGEKIYVNGAVIKVDRKVSLEFLNDVQFLLQQHVLQPEDANTPLRQLYFIVQVMLMGPEGADKTRPLLKDMLDNLLATFRNERILAGLKHVDSLVCEGQIYEALKAIRALYPIEEEILSAGRQQEQAIFAKAVGE.

The protein belongs to the FlbT family.

Has a post-transcriptional repressor function in flagellum biogenesis. Associates with the 5'-UTR of fljK mRNA and promotes its degradation. This is Probable flagellum biosynthesis repressor protein FlbT from Chelativorans sp. (strain BNC1).